Consider the following 238-residue polypeptide: Pyridoxine 5'-phosphate synthase (238 aa).

Asparagine 9 lines the 3-amino-2-oxopropyl phosphate pocket. 11–12 (DH) is a 1-deoxy-D-xylulose 5-phosphate binding site. A 3-amino-2-oxopropyl phosphate-binding site is contributed by arginine 20. The Proton acceptor role is filled by histidine 45. Residues arginine 47 and histidine 52 each contribute to the 1-deoxy-D-xylulose 5-phosphate site. The active-site Proton acceptor is glutamate 72. A 1-deoxy-D-xylulose 5-phosphate-binding site is contributed by threonine 102. Histidine 189 functions as the Proton donor in the catalytic mechanism. 3-amino-2-oxopropyl phosphate is bound by residues glycine 190 and 211–212 (GH).

The protein belongs to the PNP synthase family. In terms of assembly, homooctamer; tetramer of dimers.

It is found in the cytoplasm. The catalysed reaction is 3-amino-2-oxopropyl phosphate + 1-deoxy-D-xylulose 5-phosphate = pyridoxine 5'-phosphate + phosphate + 2 H2O + H(+). It participates in cofactor biosynthesis; pyridoxine 5'-phosphate biosynthesis; pyridoxine 5'-phosphate from D-erythrose 4-phosphate: step 5/5. In terms of biological role, catalyzes the complicated ring closure reaction between the two acyclic compounds 1-deoxy-D-xylulose-5-phosphate (DXP) and 3-amino-2-oxopropyl phosphate (1-amino-acetone-3-phosphate or AAP) to form pyridoxine 5'-phosphate (PNP) and inorganic phosphate. The sequence is that of Pyridoxine 5'-phosphate synthase from Ehrlichia ruminantium (strain Gardel).